Reading from the N-terminus, the 608-residue chain is Extracellular metalloproteinase 5 (608 aa).

Residues M1–A20 form the signal peptide. Positions H21 to H244 are excised as a propeptide. The N-linked (GlcNAc...) asparagine glycan is linked to N285. H427 contributes to the Zn(2+) binding site. E428 is a catalytic residue. H431 provides a ligand contact to Zn(2+). N591 carries an N-linked (GlcNAc...) asparagine glycan.

Belongs to the peptidase M36 family. Requires Zn(2+) as cofactor.

Its subcellular location is the secreted. Functionally, secreted metalloproteinase probably acting as a virulence factor. This is Extracellular metalloproteinase 5 (MEP5) from Trichophyton tonsurans (Scalp ringworm fungus).